We begin with the raw amino-acid sequence, 828 residues long: ADP-ribosylation factor GTPase-activating protein AGD1 (828 aa).

The region spanning 1-225 (MHFAKLDDSP…INQVLAYAHQ (225 aa)) is the BAR domain. Positions 225–255 (QSRECANYEMASLNERMQEYQRQVDRETRNS) form a coiled coil. The disordered stretch occupies residues 247–268 (QVDRETRNSCVSPTGDGMRHNS). The PH domain maps to 288 to 425 (QTIRQGYLSK…WIEKITGVIA (138 aa)). A Phosphoserine modification is found at Ser441. Residues 498–643 (EKPIDVLTRV…IFVRKAIDSQ (146 aa)) form the Arf-GAP domain. Residues 513 to 536 (CADCGAPEPDWASLNLGVLICIEC) form a C4-type zinc finger. The span at 590–600 (TSSASRSSGTP) shows a compositional bias: low complexity. Positions 590-611 (TSSASRSSGTPKSDRPRKLLVR) are disordered. ANK repeat units lie at residues 735-764 (NDCS…KINA) and 768-797 (KGRT…DPNA).

As to expression, expressed in roots, but not in hypocotyls or cotyledons. Low levels detected in leaf and shoot apical meristems and in siliques.

It is found in the endosome. Functionally, probable GTPase-activating protein. Regulator of membrane trafficking. Required for maintaining a straight growth of root hairs. The chain is ADP-ribosylation factor GTPase-activating protein AGD1 (AGD1) from Arabidopsis thaliana (Mouse-ear cress).